The chain runs to 392 residues: MDEILKQEMQKELTTRILPYWMERMVDQENGGFYGRITGQEELMPRADKGAILNARILWTYSAAYRLLGREEYKEMANRAKRYLIDHFYDSEFGGVYWSLNYRGEPLDTKKQIYAIGFAIYGLSEFHRATGDPEALMYAVRLFNDIESHSFDGLKNGYCEALTREWNEIADMRLSEKDANERKTMNTHLHILEPYTNLYRVWKDARLERQLYNLIGLFTEKILDKDTSHLQLFFDNDWQSKYPVVSYGHDIEASWLLHEAARVLGDAGLIAEIEPVVKKIAAAASEGLTSDGGMIYEKNLTTGHIDGDYHWWVQAETVVGYYNLFRYFGDRGALQHSIDCWEFIKRHLTDDVHGEWFWSLRADGSLNRDDDKAGFWKCPYHNGRMCIELLGE.

The protein belongs to the cellobiose 2-epimerase family.

The enzyme catalyses D-cellobiose = beta-D-glucosyl-(1-&gt;4)-D-mannopyranose. Functionally, catalyzes the reversible epimerization of cellobiose to 4-O-beta-D-glucopyranosyl-D-mannose (Glc-Man). Can also epimerize cellotriose to Glc-Glc-Man, cellotetraose to Glc-Glc-Glc-Man, lactose to epilactose, and mannobiose to 4-O-beta-D-mannopyranosyl-D-glucopyranose (Man-Glc). May function as a mannobiose 2-epimerase in vivo and be involved in a mannan catabolic pathway which feeds into glycolysis. The sequence is that of Cellobiose 2-epimerase (bfce) from Bacteroides fragilis (strain ATCC 25285 / DSM 2151 / CCUG 4856 / JCM 11019 / LMG 10263 / NCTC 9343 / Onslow / VPI 2553 / EN-2).